A 609-amino-acid polypeptide reads, in one-letter code: MNLIILKRHFSQHASLCLTPSISSSAPTKQSRILELCKLGQLTEAIRILNSTHSSEIPATPKLYASLLQTCNKVFSFIHGIQFHAHVVKSGLETDRNVGNSLLSLYFKLGPGMRETRRVFDGRFVKDAISWTSMMSGYVTGKEHVKALEVFVEMVSFGLDANEFTLSSAVKACSELGEVRLGRCFHGVVITHGFEWNHFISSTLAYLYGVNREPVDARRVFDEMPEPDVICWTAVLSAFSKNDLYEEALGLFYAMHRGKGLVPDGSTFGTVLTACGNLRRLKQGKEIHGKLITNGIGSNVVVESSLLDMYGKCGSVREARQVFNGMSKKNSVSWSALLGGYCQNGEHEKAIEIFREMEEKDLYCFGTVLKACAGLAAVRLGKEIHGQYVRRGCFGNVIVESALIDLYGKSGCIDSASRVYSKMSIRNMITWNAMLSALAQNGRGEEAVSFFNDMVKKGIKPDYISFIAILTACGHTGMVDEGRNYFVLMAKSYGIKPGTEHYSCMIDLLGRAGLFEEAENLLERAECRNDASLWGVLLGPCAANADASRVAERIAKRMMELEPKYHMSYVLLSNMYKAIGRHGDALNIRKLMVRRGVAKTVGQSWIDAH.

PPR repeat units follow at residues 25 to 59, 60 to 94, 95 to 126, 127 to 161, 162 to 196, 197 to 227, 228 to 263, 264 to 298, 299 to 329, 330 to 364, 396 to 426, 427 to 461, 462 to 497, and 498 to 532; these read SAPT…EIPA, TPKL…GLET, DRNV…RFVK, DAIS…GLDA, NEFT…GFEW, NHFI…MPEP, DVIC…GLVP, DGST…GIGS, NVVV…MSKK, NSVS…DLYC, NVIV…MSIR, NMIT…GIKP, DYIS…GIKP, and GTEH…NDAS. The interval 533 to 609 is type E motif; that stretch reads LWGVLLGPCA…TVGQSWIDAH (77 aa).

The protein belongs to the PPR family. PCMP-E subfamily.

The polypeptide is Pentatricopeptide repeat-containing protein At1g03540 (PCMP-E4) (Arabidopsis thaliana (Mouse-ear cress)).